We begin with the raw amino-acid sequence, 239 residues long: Non-classical arabinogalactan protein 30 (239 aa).

The N-terminal stretch at 1 to 24 (MGIIGKSVSLTLFALLCFTSSVFT) is a signal peptide. An N-linked (GlcNAc...) asparagine glycan is attached at asparagine 106.

The protein belongs to the non-classical AGP family. In terms of tissue distribution, specifically expressed in root tips.

The protein localises to the secreted. It is found in the cell wall. Its function is as follows. Proteoglycan required for the timing of seed germination. May function in the abscisic acid (ABA) response. The chain is Non-classical arabinogalactan protein 30 from Arabidopsis thaliana (Mouse-ear cress).